A 447-amino-acid polypeptide reads, in one-letter code: 3-O-methyltransferase 2 (447 aa).

S-adenosyl-L-methionine is bound by residues 264 to 265 (GG), aspartate 287, 318 to 319 (DF), and arginine 334. The active-site Proton acceptor is the histidine 338.

It belongs to the class I-like SAM-binding methyltransferase superfamily. Cation-independent O-methyltransferase family. COMT subfamily.

S-adenosyl-L-methionine-dependent methyltransferase that preferentially catalyzes the methylation of 3-OH phenolic compounds like isovanillic acid and 3-OH-4-Met cinnamic acid. May play a role in promoting lignin degradation by methylating and inactivating free-hydroxyl phenolic compounds, products of lignin cleavage which are known inhibitors of lignin peroxidases. This is 3-O-methyltransferase 2 from Phanerochaete chrysosporium (strain RP-78 / ATCC MYA-4764 / FGSC 9002) (White-rot fungus).